A 119-amino-acid polypeptide reads, in one-letter code: Protein MGF 110-11L (119 aa).

The N-terminal stretch at 1-17 is a signal peptide; it reads MKVLLGLLLGYSVLILA.

The protein belongs to the asfivirus MGF 110 family.

This is Protein MGF 110-11L from Ornithodoros (relapsing fever ticks).